The sequence spans 368 residues: tRNA-specific 2-thiouridylase MnmA (368 aa).

Residues 11–18 (GMSGGVDS) and Met37 each bind ATP. An interaction with target base in tRNA region spans residues 97–99 (NPD). Cys102 acts as the Nucleophile in catalysis. A disulfide bridge connects residues Cys102 and Cys199. ATP is bound at residue Gly127. The interval 149–151 (KDQ) is interaction with tRNA. The active-site Cysteine persulfide intermediate is the Cys199. An interaction with tRNA region spans residues 311–312 (RY).

It belongs to the MnmA/TRMU family. As to quaternary structure, interacts with TusE.

It is found in the cytoplasm. The enzyme catalyses S-sulfanyl-L-cysteinyl-[protein] + uridine(34) in tRNA + AH2 + ATP = 2-thiouridine(34) in tRNA + L-cysteinyl-[protein] + A + AMP + diphosphate + H(+). Functionally, catalyzes the 2-thiolation of uridine at the wobble position (U34) of tRNA(Lys), tRNA(Glu) and tRNA(Gln), leading to the formation of s(2)U34, the first step of tRNA-mnm(5)s(2)U34 synthesis. Sulfur is provided by IscS, via a sulfur-relay system. Binds ATP and its substrate tRNAs. This chain is tRNA-specific 2-thiouridylase MnmA, found in Shigella flexneri serotype 5b (strain 8401).